The sequence spans 211 residues: Dual specificity protein phosphatase 26 (211 aa).

Residues 60-207 (NHADEVWPGL…LLALDRRLRQ (148 aa)) form the Tyrosine-protein phosphatase domain. C152 acts as the Phosphocysteine intermediate in catalysis.

It belongs to the protein-tyrosine phosphatase family. Non-receptor class dual specificity subfamily. Interacts with HSF4. As to expression, brain and skeletal muscle. In the brain it is expressed ubiquitously except in the hippocampus.

It localises to the cytoplasm. Its subcellular location is the nucleus. The protein localises to the golgi apparatus. It carries out the reaction O-phospho-L-tyrosyl-[protein] + H2O = L-tyrosyl-[protein] + phosphate. The enzyme catalyses O-phospho-L-seryl-[protein] + H2O = L-seryl-[protein] + phosphate. The catalysed reaction is O-phospho-L-threonyl-[protein] + H2O = L-threonyl-[protein] + phosphate. In terms of biological role, inactivates MAPK1 and MAPK3 which leads to dephosphorylation of heat shock factor protein 4 and a reduction in its DNA-binding activity. This is Dual specificity protein phosphatase 26 (Dusp26) from Mus musculus (Mouse).